The primary structure comprises 118 residues: Vesicle-associated membrane protein 1 (118 aa).

Residues 1 to 36 (MSAPAQPPAEGTEGTAPGGGPPGPPPNMTSNRRLQQ) form a disordered region. The Cytoplasmic segment spans residues 1–96 (MSAPAQPPAE…KRKYWWKNCK (96 aa)). The v-SNARE coiled-coil homology domain maps to 33 to 93 (RLQQTQAQVE…AKLKRKYWWK (61 aa)). Position 63 is a phosphoserine (Ser-63). A helical; Anchor for type IV membrane protein transmembrane segment spans residues 97 to 116 (MMIMLGAICAIIVVVIVIYF). The Vesicular portion of the chain corresponds to 117–118 (FT).

Belongs to the synaptobrevin family. In terms of assembly, interacts with VAPA and VAPB. Post-translationally, (Microbial infection) Targeted and hydrolyzed by C.botulinum neurotoxin type B (BoNT/B, botB) which probably hydrolyzes the 78-Gln-|-Phe-79 bond and inhibits neurotransmitter release. (Microbial infection) Targeted and hydrolyzed by C.botulinum neurotoxin type D (BoNT/D, botD) which probably hydrolyzes the 61-Arg-|-Leu-62 bond and inhibits neurotransmitter release. BoNT/D has low catalytic activity on this protein due to its sequence. Note that humans are not known to be infected by C.botulinum type D. In terms of processing, (Microbial infection) Targeted and hydrolyzed by C.botulinum neurotoxin type F (BoNT/F, botF) which probably hydrolyzes the 60-Gln-|-Lys-61 bond and inhibits neurotransmitter release. Post-translationally, (Microbial infection) Targeted and hydrolyzed by C.botulinum neurotoxin type X (BoNT/X) which probably hydrolyzes the 68-Arg-|-Ala-69 bond and inhibits neurotransmitter release. It remains unknown whether BoNT/X is ever produced, or what organisms it targets. As to expression, nervous system, skeletal muscle and adipose tissue.

The protein localises to the cytoplasmic vesicle. It localises to the secretory vesicle. Its subcellular location is the synaptic vesicle membrane. It is found in the synapse. The protein resides in the synaptosome. The protein localises to the cytoplasmic vesicle membrane. It localises to the mitochondrion outer membrane. Functionally, involved in the targeting and/or fusion of transport vesicles to their target membrane. The protein is Vesicle-associated membrane protein 1 (VAMP1) of Homo sapiens (Human).